Consider the following 1611-residue polypeptide: Non-structural polyprotein 1AB (1611 aa).

Positions 124–187 form a coiled coil; that stretch reads TTSNLIARAM…ELHLLKELGK (64 aa). A run of 7 helical transmembrane segments spans residues 195–215, 329–348, 353–373, 375–395, 397–417, 426–446, and 450–470; these read AFSFFDWLFMAVVFFLFLHYT, ISYYKLDALVTFAFSAALAT, MVMVLPLLLVALYLNVPPITV, IASVIFQPLILPFVGFQLVFP, FLPYNLFVAWVWMVCQAFFSS, VSTALVQVVFLAVWSISVIVL, and SIPMVAQILLFVATLTVSVGV. Catalysis depends on charge relay system; for serine protease activity residues His550, Asp582, and Ser647. Residue Tyr833 is modified to O-(5'-phospho-RNA)-tyrosine. A RdRp catalytic domain is found at 1352–1486; that stretch reads RYYVELDWTR…AVDKRFINSY (135 aa).

It belongs to the astroviridae polyprotein 1AB family. As to quaternary structure, monomer. Cleaved by the viral and host proteases. The protease is probably autocatalytically cleaved.

Its subcellular location is the host membrane. The enzyme catalyses RNA(n) + a ribonucleoside 5'-triphosphate = RNA(n+1) + diphosphate. Functionally, responsible for the cleavage of the polyprotein into functional products. Protein covalently attached to the 5' extremity of the genomic and subgenomic RNAs. It may serve as a primer for the replicase. This chain is Non-structural polyprotein 1AB (ORF1), found in Turkey astrovirus 1 (TAstV-1).